Consider the following 366-residue polypeptide: tRNA/tmRNA (uracil-C(5))-methyltransferase (366 aa).

The S-adenosyl-L-methionine site is built by Gln-190, Tyr-218, Asn-223, Glu-239, and Asp-299. Residue Cys-324 is the Nucleophile of the active site. Glu-358 (proton acceptor) is an active-site residue.

The protein belongs to the class I-like SAM-binding methyltransferase superfamily. RNA M5U methyltransferase family. TrmA subfamily.

The catalysed reaction is uridine(54) in tRNA + S-adenosyl-L-methionine = 5-methyluridine(54) in tRNA + S-adenosyl-L-homocysteine + H(+). It carries out the reaction uridine(341) in tmRNA + S-adenosyl-L-methionine = 5-methyluridine(341) in tmRNA + S-adenosyl-L-homocysteine + H(+). In terms of biological role, dual-specificity methyltransferase that catalyzes the formation of 5-methyluridine at position 54 (m5U54) in all tRNAs, and that of position 341 (m5U341) in tmRNA (transfer-mRNA). In Salmonella choleraesuis (strain SC-B67), this protein is tRNA/tmRNA (uracil-C(5))-methyltransferase.